The following is an 85-amino-acid chain: Beta-insect depressant toxin Lqh-dprIT3g (85 aa).

An N-terminal signal peptide occupies residues 1 to 21 (MKLLLLLTISASMLIEGLVNA). The LCN-type CS-alpha/beta domain occupies 22 to 82 (DGYIRGGDGC…EWDYETDTCG (61 aa)). Disulfide bonds link Cys31–Cys81, Cys35–Cys56, Cys42–Cys63, and Cys46–Cys65. At Gly82 the chain carries Glycine amide.

The protein belongs to the long (4 C-C) scorpion toxin superfamily. Sodium channel inhibitor family. Beta subfamily. As to expression, expressed by the venom gland.

Its subcellular location is the secreted. Its function is as follows. Depressant insect beta-toxins cause a transient contraction paralysis followed by a slow flaccid paralysis. They bind voltage-independently at site-4 of sodium channels (Nav) and block action potentials, primarily by depolarizing the axonal membrane and suppressing the sodium current. This depressant toxin is active only on insects. It is found in a relatively small amount in the venom. The chain is Beta-insect depressant toxin Lqh-dprIT3g from Leiurus hebraeus (Hebrew deathstalker scorpion).